The sequence spans 115 residues: Class I hydrophobin 21 (115 aa).

The first 20 residues, 1-20 (MFAAPATMLVLAALAALSSA), serve as a signal peptide directing secretion. 4 disulfide bridges follow: Cys-30-Cys-93, Cys-37-Cys-87, Cys-38-Cys-77, and Cys-94-Cys-107.

This sequence belongs to the fungal hydrophobin family. Self-assembles to form functional amyloid fibrils called rodlets. Self-assembly into fibrillar rodlets occurs spontaneously at hydrophobic:hydrophilic interfaces and the rodlets further associate laterally to form amphipathic monolayers.

Its subcellular location is the secreted. It localises to the cell wall. Aerial growth, conidiation, and dispersal of filamentous fungi in the environment rely upon a capability of their secreting small amphipathic proteins called hydrophobins (HPBs) with low sequence identity. Class I can self-assemble into an outermost layer of rodlet bundles on aerial cell surfaces, conferring cellular hydrophobicity that supports fungal growth, development and dispersal; whereas Class II form highly ordered films at water-air interfaces through intermolecular interactions but contribute nothing to the rodlet structure. The polypeptide is Class I hydrophobin 21 (Pleurotus ostreatus (strain PC15) (Oyster mushroom)).